The chain runs to 353 residues: tRNA-cytidine(32) 2-sulfurtransferase (353 aa).

A PP-loop motif motif is present at residues 49–54 (SGGKDS). Positions 124, 127, and 215 each coordinate [4Fe-4S] cluster.

This sequence belongs to the TtcA family. In terms of assembly, homodimer. Requires Mg(2+) as cofactor. [4Fe-4S] cluster serves as cofactor.

Its subcellular location is the cytoplasm. The catalysed reaction is cytidine(32) in tRNA + S-sulfanyl-L-cysteinyl-[cysteine desulfurase] + AH2 + ATP = 2-thiocytidine(32) in tRNA + L-cysteinyl-[cysteine desulfurase] + A + AMP + diphosphate + H(+). Its pathway is tRNA modification. Its function is as follows. Catalyzes the ATP-dependent 2-thiolation of cytidine in position 32 of tRNA, to form 2-thiocytidine (s(2)C32). The sulfur atoms are provided by the cysteine/cysteine desulfurase (IscS) system. This chain is tRNA-cytidine(32) 2-sulfurtransferase, found in Sodalis glossinidius (strain morsitans).